A 631-amino-acid chain; its full sequence is Glutamyl-tRNA(Gln) amidotransferase subunit E (631 aa).

Belongs to the GatB/GatE family. GatE subfamily. As to quaternary structure, heterodimer of GatD and GatE.

The catalysed reaction is L-glutamyl-tRNA(Gln) + L-glutamine + ATP + H2O = L-glutaminyl-tRNA(Gln) + L-glutamate + ADP + phosphate + H(+). In terms of biological role, allows the formation of correctly charged Gln-tRNA(Gln) through the transamidation of misacylated Glu-tRNA(Gln) in organisms which lack glutaminyl-tRNA synthetase. The reaction takes place in the presence of glutamine and ATP through an activated gamma-phospho-Glu-tRNA(Gln). The GatDE system is specific for glutamate and does not act on aspartate. The chain is Glutamyl-tRNA(Gln) amidotransferase subunit E from Methanococcus maripaludis (strain C7 / ATCC BAA-1331).